The chain runs to 206 residues: Thiamine-phosphate synthase (206 aa).

Residues 39-43 and Asn74 each bind 4-amino-2-methyl-5-(diphosphooxymethyl)pyrimidine; that span reads QYREK. Residues Asp75 and Asp94 each contribute to the Mg(2+) site. Ser112 provides a ligand contact to 4-amino-2-methyl-5-(diphosphooxymethyl)pyrimidine. 138-140 contacts 2-[(2R,5Z)-2-carboxy-4-methylthiazol-5(2H)-ylidene]ethyl phosphate; it reads TNT. Lys141 contributes to the 4-amino-2-methyl-5-(diphosphooxymethyl)pyrimidine binding site. Residues Gly170 and 190–191 each bind 2-[(2R,5Z)-2-carboxy-4-methylthiazol-5(2H)-ylidene]ethyl phosphate; that span reads IS.

It belongs to the thiamine-phosphate synthase family. The cofactor is Mg(2+).

It catalyses the reaction 2-[(2R,5Z)-2-carboxy-4-methylthiazol-5(2H)-ylidene]ethyl phosphate + 4-amino-2-methyl-5-(diphosphooxymethyl)pyrimidine + 2 H(+) = thiamine phosphate + CO2 + diphosphate. The catalysed reaction is 2-(2-carboxy-4-methylthiazol-5-yl)ethyl phosphate + 4-amino-2-methyl-5-(diphosphooxymethyl)pyrimidine + 2 H(+) = thiamine phosphate + CO2 + diphosphate. It carries out the reaction 4-methyl-5-(2-phosphooxyethyl)-thiazole + 4-amino-2-methyl-5-(diphosphooxymethyl)pyrimidine + H(+) = thiamine phosphate + diphosphate. It functions in the pathway cofactor biosynthesis; thiamine diphosphate biosynthesis; thiamine phosphate from 4-amino-2-methyl-5-diphosphomethylpyrimidine and 4-methyl-5-(2-phosphoethyl)-thiazole: step 1/1. Condenses 4-methyl-5-(beta-hydroxyethyl)thiazole monophosphate (THZ-P) and 2-methyl-4-amino-5-hydroxymethyl pyrimidine pyrophosphate (HMP-PP) to form thiamine monophosphate (TMP). The sequence is that of Thiamine-phosphate synthase from Oceanobacillus iheyensis (strain DSM 14371 / CIP 107618 / JCM 11309 / KCTC 3954 / HTE831).